Here is a 627-residue protein sequence, read N- to C-terminus: Translation factor GUF1, mitochondrial (627 aa).

Residues 1 to 16 (MSLAWSAGRAWSRQSY) constitute a mitochondrion transit peptide. The 182-residue stretch at 40 to 221 (ERYRNFCIVA…AVIERIPHPV (182 aa)) folds into the tr-type G domain. GTP is bound by residues 49-56 (AHIDHGKS), 114-118 (DTPGH), and 168-171 (NKID).

This sequence belongs to the TRAFAC class translation factor GTPase superfamily. Classic translation factor GTPase family. LepA subfamily.

It is found in the mitochondrion inner membrane. It catalyses the reaction GTP + H2O = GDP + phosphate + H(+). In terms of biological role, promotes mitochondrial protein synthesis. May act as a fidelity factor of the translation reaction, by catalyzing a one-codon backward translocation of tRNAs on improperly translocated ribosomes. Binds to mitochondrial ribosomes in a GTP-dependent manner. The protein is Translation factor GUF1, mitochondrial of Fusarium vanettenii (strain ATCC MYA-4622 / CBS 123669 / FGSC 9596 / NRRL 45880 / 77-13-4) (Fusarium solani subsp. pisi).